The primary structure comprises 467 residues: Peroxisome proliferator-activated receptor alpha (467 aa).

A DNA-binding region (nuclear receptor) is located at residues 99-173; the sequence is NIECRICGDK…VGMSHNAIRF (75 aa). 2 NR C4-type zinc fingers span residues 102-122 and 139-161; these read CRICGDKASGYHYGVHACEGC and CDRSCKIQKKNRNKCQYCRFHKC. The NR LBD domain maps to 239–466; the sequence is FVIHDMETLC…PLLQEIYRDM (228 aa). The interval 304-433 is required for heterodimerization with RXRA; that stretch reads DQVTLLKYGV…PKLLQKLADL (130 aa).

This sequence belongs to the nuclear hormone receptor family. NR1 subfamily. In terms of assembly, heterodimer; with RXRA. This heterodimerization is required for DNA binding and transactivation activity. Interacts with NCOA3 coactivator. Interacts with CITED2; the interaction stimulates its transcriptional activity. Also interacts with PPARBP in vitro. Interacts with AKAP13, LPIN1, PRDM16 and coactivator NCOA6. Interacts with ASXL1 and ASXL2. Interacts with PER2. Interacts with SIRT1; the interaction seems to be modulated by NAD(+) levels. Interacts with CRY1 and CRY2. In hepatocytes, interacts with PAQR3 and HUWE1; the interactions promote PPARA poylubiquitination and HUWE1-mediated degradation. In terms of processing, ubiquitinated by E3 ubiquitin-protein ligase HUWE1; leading to proteasomal degradation. Phosphorylated.

Its subcellular location is the nucleus. Functionally, ligand-activated transcription factor. Key regulator of lipid metabolism. Activated by the endogenous ligand 1-palmitoyl-2-oleoyl-sn-glycerol-3-phosphocholine (16:0/18:1-GPC). Activated by oleylethanolamide, a naturally occurring lipid that regulates satiety. Receptor for peroxisome proliferators such as hypolipidemic drugs and fatty acids. Regulates the peroxisomal beta-oxidation pathway of fatty acids. Functions as a transcription activator for the ACOX1 and P450 genes. Transactivation activity requires heterodimerization with RXRA and is antagonized by NR2C2. May be required for the propagation of clock information to metabolic pathways regulated by PER2. The sequence is that of Peroxisome proliferator-activated receptor alpha (PPARA) from Cavia porcellus (Guinea pig).